The chain runs to 353 residues: Photosystem II protein D1 (353 aa).

Position 2 is an N-acetylthreonine (Thr-2). Thr-2 carries the phosphothreonine modification. The next 3 helical transmembrane spans lie at 29 to 46 (YIGWFGVLMIPTLLTATS), 118 to 133 (HFLLGVACYMGREWEL), and 142 to 156 (WIAVAYSAPVAAATA). His-118 serves as a coordination point for chlorophyll a. Tyr-126 serves as a coordination point for pheophytin a. Residues Asp-170 and Glu-189 each coordinate [CaMn4O5] cluster. A helical membrane pass occupies residues 197-218 (FHMLGVAGVFGGSLFSAMHGSL). Position 198 (His-198) interacts with chlorophyll a. A quinone-binding positions include His-215 and 264–265 (SF). Position 215 (His-215) interacts with Fe cation. Residue His-272 coordinates Fe cation. A helical membrane pass occupies residues 274–288 (FLTAWPVVGIWFTAL). [CaMn4O5] cluster-binding residues include His-332, Glu-333, Asp-342, and Ala-344. The propeptide occupies 345 to 353 (AVEAPSTNG).

It belongs to the reaction center PufL/M/PsbA/D family. In terms of assembly, PSII is composed of 1 copy each of membrane proteins PsbA, PsbB, PsbC, PsbD, PsbE, PsbF, PsbH, PsbI, PsbJ, PsbK, PsbL, PsbM, PsbT, PsbX, PsbY, PsbZ, Psb30/Ycf12, at least 3 peripheral proteins of the oxygen-evolving complex and a large number of cofactors. It forms dimeric complexes. The D1/D2 heterodimer binds P680, chlorophylls that are the primary electron donor of PSII, and subsequent electron acceptors. It shares a non-heme iron and each subunit binds pheophytin, quinone, additional chlorophylls, carotenoids and lipids. D1 provides most of the ligands for the Mn4-Ca-O5 cluster of the oxygen-evolving complex (OEC). There is also a Cl(-1) ion associated with D1 and D2, which is required for oxygen evolution. The PSII complex binds additional chlorophylls, carotenoids and specific lipids. serves as cofactor. In terms of processing, tyr-161 forms a radical intermediate that is referred to as redox-active TyrZ, YZ or Y-Z. Post-translationally, C-terminally processed by CTPA; processing is essential to allow assembly of the oxygen-evolving complex and thus photosynthetic growth.

It is found in the plastid. It localises to the chloroplast thylakoid membrane. The catalysed reaction is 2 a plastoquinone + 4 hnu + 2 H2O = 2 a plastoquinol + O2. Its function is as follows. Photosystem II (PSII) is a light-driven water:plastoquinone oxidoreductase that uses light energy to abstract electrons from H(2)O, generating O(2) and a proton gradient subsequently used for ATP formation. It consists of a core antenna complex that captures photons, and an electron transfer chain that converts photonic excitation into a charge separation. The D1/D2 (PsbA/PsbD) reaction center heterodimer binds P680, the primary electron donor of PSII as well as several subsequent electron acceptors. This chain is Photosystem II protein D1, found in Barbarea verna (Land cress).